Here is a 147-residue protein sequence, read N- to C-terminus: Nucleoside diphosphate kinase (147 aa).

Lysine 9, phenylalanine 57, arginine 85, threonine 91, arginine 102, and asparagine 112 together coordinate ATP. The active-site Pros-phosphohistidine intermediate is the histidine 115.

It belongs to the NDK family. In terms of assembly, homotetramer. The cofactor is Mg(2+).

It localises to the cytoplasm. The enzyme catalyses a 2'-deoxyribonucleoside 5'-diphosphate + ATP = a 2'-deoxyribonucleoside 5'-triphosphate + ADP. The catalysed reaction is a ribonucleoside 5'-diphosphate + ATP = a ribonucleoside 5'-triphosphate + ADP. Functionally, major role in the synthesis of nucleoside triphosphates other than ATP. The ATP gamma phosphate is transferred to the NDP beta phosphate via a ping-pong mechanism, using a phosphorylated active-site intermediate. The sequence is that of Nucleoside diphosphate kinase from Listeria monocytogenes serotype 4b (strain F2365).